Reading from the N-terminus, the 157-residue chain is MFDVLMYLFETYIHTEAELRVDQDKLEQDLTDAGFDREDIYNALLWLEKLADYQEGLTEPMQLASDPLSMRIYTPEECERLDASCRGFLLFLEQIQVLNLEIREMVIERVLALDTAEFDLEDLKWVILMVLFNIPGCENAYQQMEELLFEVNEGMLH.

It belongs to the Smg family.

This chain is Protein Smg, found in Shigella boydii serotype 18 (strain CDC 3083-94 / BS512).